Here is a 301-residue protein sequence, read N- to C-terminus: NAD kinase (301 aa).

Residue Asp-84 is the Proton acceptor of the active site. Residues 84-85, Arg-89, 158-159, Lys-169, Asn-188, 199-204, and Gln-258 each bind NAD(+); these read DG, NE, and TAYSFS.

It belongs to the NAD kinase family. A divalent metal cation is required as a cofactor.

The protein localises to the cytoplasm. It catalyses the reaction NAD(+) + ATP = ADP + NADP(+) + H(+). Involved in the regulation of the intracellular balance of NAD and NADP, and is a key enzyme in the biosynthesis of NADP. Catalyzes specifically the phosphorylation on 2'-hydroxyl of the adenosine moiety of NAD to yield NADP. This Tropheryma whipplei (strain Twist) (Whipple's bacillus) protein is NAD kinase.